Reading from the N-terminus, the 325-residue chain is Phospho-N-acetylmuramoyl-pentapeptide-transferase (325 aa).

10 consecutive transmembrane segments (helical) span residues 5 to 25 (VLLL…PIFI), 57 to 77 (LMIL…LSIF), 81 to 101 (VLLL…DDFI), 117 to 137 (LIGQ…MGLS), 146 to 166 (SLSI…LVGA), 178 to 198 (GLVA…AWAT), 200 to 220 (YFEV…FLVF), 227 to 247 (VFMG…IAIM), 252 to 272 (ILLI…IIQV), and 304 to 324 (VTFW…EVWI).

This sequence belongs to the glycosyltransferase 4 family. MraY subfamily. It depends on Mg(2+) as a cofactor.

The protein localises to the cell membrane. The enzyme catalyses UDP-N-acetyl-alpha-D-muramoyl-L-alanyl-gamma-D-glutamyl-meso-2,6-diaminopimeloyl-D-alanyl-D-alanine + di-trans,octa-cis-undecaprenyl phosphate = di-trans,octa-cis-undecaprenyl diphospho-N-acetyl-alpha-D-muramoyl-L-alanyl-D-glutamyl-meso-2,6-diaminopimeloyl-D-alanyl-D-alanine + UMP. It participates in cell wall biogenesis; peptidoglycan biosynthesis. Catalyzes the initial step of the lipid cycle reactions in the biosynthesis of the cell wall peptidoglycan: transfers peptidoglycan precursor phospho-MurNAc-pentapeptide from UDP-MurNAc-pentapeptide onto the lipid carrier undecaprenyl phosphate, yielding undecaprenyl-pyrophosphoryl-MurNAc-pentapeptide, known as lipid I. The chain is Phospho-N-acetylmuramoyl-pentapeptide-transferase from Halalkalibacterium halodurans (strain ATCC BAA-125 / DSM 18197 / FERM 7344 / JCM 9153 / C-125) (Bacillus halodurans).